A 573-amino-acid polypeptide reads, in one-letter code: 60 kDa heat shock protein, mitochondrial (573 aa).

A mitochondrion-targeting transit peptide spans 1–26 (MLRLPAVLRQIRPVSRALAPHLTRAY). ATP contacts are provided by residues Lys-75 and 111–115 (DGTTT). The residue at position 227 (Tyr-227) is a Phosphotyrosine. ATP is bound by residues Gly-440 and Asp-520.

It is found in the mitochondrion matrix. The enzyme catalyses ATP + H2O + a folded polypeptide = ADP + phosphate + an unfolded polypeptide.. Chaperonin implicated in mitochondrial protein import and macromolecular assembly. Together with Hsp10, facilitates the correct folding of imported proteins. May also prevent misfolding and promote the refolding and proper assembly of unfolded polypeptides generated under stress conditions in the mitochondrial matrix. The functional units of these chaperonins consist of heptameric rings of the large subunit Hsp60, which function as a back-to-back double ring. In a cyclic reaction, Hsp60 ring complexes bind one unfolded substrate protein per ring, followed by the binding of ATP and association with 2 heptameric rings of the co-chaperonin Hsp10. This leads to sequestration of the substrate protein in the inner cavity of Hsp60 where, for a certain period of time, it can fold undisturbed by other cell components. Synchronous hydrolysis of ATP in all Hsp60 subunits results in the dissociation of the chaperonin rings and the release of ADP and the folded substrate protein. This Gallus gallus (Chicken) protein is 60 kDa heat shock protein, mitochondrial.